The chain runs to 518 residues: ATP synthase subunit alpha (518 aa).

ATP is bound at residue 169–176; that stretch reads GDRQTGKT.

This sequence belongs to the ATPase alpha/beta chains family. As to quaternary structure, F-type ATPases have 2 components, CF(1) - the catalytic core - and CF(0) - the membrane proton channel. CF(1) has five subunits: alpha(3), beta(3), gamma(1), delta(1), epsilon(1). CF(0) has three main subunits: a(1), b(2) and c(9-12). The alpha and beta chains form an alternating ring which encloses part of the gamma chain. CF(1) is attached to CF(0) by a central stalk formed by the gamma and epsilon chains, while a peripheral stalk is formed by the delta and b chains.

Its subcellular location is the cell membrane. The enzyme catalyses ATP + H2O + 4 H(+)(in) = ADP + phosphate + 5 H(+)(out). Produces ATP from ADP in the presence of a proton gradient across the membrane. The alpha chain is a regulatory subunit. In Mycoplasma genitalium (strain ATCC 33530 / DSM 19775 / NCTC 10195 / G37) (Mycoplasmoides genitalium), this protein is ATP synthase subunit alpha.